The following is a 144-amino-acid chain: Acidic phospholipase A2 (144 aa).

A signal peptide spans 1 to 19 (MYPAHLLVLLAVCVSLLGA). Residues 20–27 (SDIPPLPL) constitute a propeptide that is removed on maturation. Disulfide bonds link C38–C98, C54–C143, C56–C72, C71–C125, C78–C118, C87–C111, and C105–C116. Y55, G57, and G59 together coordinate Ca(2+). H75 is a catalytic residue. Position 76 (D76) interacts with Ca(2+). The active site involves D119.

Belongs to the phospholipase A2 family. Group I subfamily. D49 sub-subfamily. The cofactor is Ca(2+). In terms of tissue distribution, expressed by the venom gland.

The protein localises to the secreted. The catalysed reaction is a 1,2-diacyl-sn-glycero-3-phosphocholine + H2O = a 1-acyl-sn-glycero-3-phosphocholine + a fatty acid + H(+). Functionally, PLA2 catalyzes the calcium-dependent hydrolysis of the 2-acyl groups in 3-sn-phosphoglycerides. The chain is Acidic phospholipase A2 from Aipysurus laevis (Olive sea snake).